We begin with the raw amino-acid sequence, 65 residues long: Large ribosomal subunit protein bL35 (65 aa).

This sequence belongs to the bacterial ribosomal protein bL35 family.

This is Large ribosomal subunit protein bL35 from Rhodospirillum rubrum (strain ATCC 11170 / ATH 1.1.1 / DSM 467 / LMG 4362 / NCIMB 8255 / S1).